We begin with the raw amino-acid sequence, 418 residues long: AP-3 complex subunit mu-2 (418 aa).

Residues 176–417 form the MHD domain; sequence NNEAYFDVVE…MTKAGKFQVR (242 aa).

It belongs to the adaptor complexes medium subunit family. Adaptor protein complex 3 (AP-3) is a heterotetramer composed of two large adaptins (delta-type subunit AP3D1 and beta-type subunit AP3B1 or AP3B2), a medium adaptin (mu-type subunit AP3M1 or AP3M2) and a small adaptin (sigma-type subunit APS1 or AP3S2). AP-3 associates with the BLOC-1 complex.

It is found in the golgi apparatus. The protein localises to the cytoplasmic vesicle membrane. Functionally, component of the adaptor complexes which link clathrin to receptors in coated vesicles. Clathrin-associated protein complexes are believed to interact with the cytoplasmic tails of membrane proteins, leading to their selection and concentration. Ap47 is a subunit of the plasma membrane adaptor. In concert with the BLOC-1 complex, AP-3 is required to target cargos into vesicles assembled at cell bodies for delivery into neurites and nerve terminals. The sequence is that of AP-3 complex subunit mu-2 (Ap3m2) from Rattus norvegicus (Rat).